A 336-amino-acid chain; its full sequence is Coproporphyrin III ferrochelatase (336 aa).

The Fe-coproporphyrin III site is built by serine 52 and tyrosine 116. Residues histidine 172 and glutamate 255 each coordinate Fe(2+).

This sequence belongs to the ferrochelatase family.

It is found in the cytoplasm. The enzyme catalyses Fe-coproporphyrin III + 2 H(+) = coproporphyrin III + Fe(2+). Its pathway is porphyrin-containing compound metabolism; protoheme biosynthesis. Its function is as follows. Involved in coproporphyrin-dependent heme b biosynthesis. Catalyzes the insertion of ferrous iron into coproporphyrin III to form Fe-coproporphyrin III. The protein is Coproporphyrin III ferrochelatase of Mycolicibacterium paratuberculosis (strain ATCC BAA-968 / K-10) (Mycobacterium paratuberculosis).